Consider the following 215-residue polypeptide: Cytochrome b6 (215 aa).

Residues 32–52 (LFYCLGGITLTCFLIQVATGF) form a helical membrane-spanning segment. Cys35 provides a ligand contact to heme c. Heme b-binding residues include His86 and His100. The next 3 membrane-spanning stretches (helical) occupy residues 90–110 (ASMMVLMMVLHVFRVYLTGGF), 116–136 (STWVTGVIMASCTVSFGVTGY), and 186–206 (LHTFVLPLLTAVFMLGHFLMI). Heme b-binding residues include His187 and His202.

This sequence belongs to the cytochrome b family. PetB subfamily. The 4 large subunits of the cytochrome b6-f complex are cytochrome b6, subunit IV (17 kDa polypeptide, PetD), cytochrome f and the Rieske protein, while the 4 small subunits are PetG, PetL, PetM and PetN. The complex functions as a dimer. The cofactor is heme b. Heme c serves as cofactor.

Its subcellular location is the plastid. The protein localises to the chloroplast thylakoid membrane. Component of the cytochrome b6-f complex, which mediates electron transfer between photosystem II (PSII) and photosystem I (PSI), cyclic electron flow around PSI, and state transitions. The polypeptide is Cytochrome b6 (Bigelowiella natans (Pedinomonas minutissima)).